Here is a 335-residue protein sequence, read N- to C-terminus: Legumin type B (335 aa).

2 disordered regions span residues 47–87 (PETQ…GNSV) and 102–155 (TEED…GRNG). Residues 105–118 (DTAKRLRSPRDKRN) are compositionally biased toward basic and acidic residues. Over residues 135-144 (QQEEEEQEEE) the composition is skewed to acidic residues. The region spanning 167–314 (ENIAQPARAD…AFGLRQRQVT (148 aa)) is the Cupin type-1 domain.

It belongs to the 11S seed storage protein (globulins) family. In terms of assembly, hexamer; each subunit is composed of an acidic and a basic chain derived from a single precursor and linked by a disulfide bond.

This protein found in the seeds of many leguminous and non-leguminous plants is the source of sulfur-containing amino acids in seed meals. This is Legumin type B (LEB7) from Vicia faba (Broad bean).